Reading from the N-terminus, the 484-residue chain is 6-phosphogluconate dehydrogenase, decarboxylating (484 aa).

Residues 11–16 (GLAVMG), 34–36 (NRT), 76–78 (VRA), and Asn-104 contribute to the NADP(+) site. Residues Asn-104 and 130-132 (SGG) contribute to the substrate site. Residue Lys-185 is the Proton acceptor of the active site. 188 to 189 (HN) is a binding site for substrate. Glu-192 acts as the Proton donor in catalysis. 5 residues coordinate substrate: Tyr-193, Lys-262, Arg-289, Arg-447, and His-453.

This sequence belongs to the 6-phosphogluconate dehydrogenase family. Homodimer.

The enzyme catalyses 6-phospho-D-gluconate + NADP(+) = D-ribulose 5-phosphate + CO2 + NADPH. The protein operates within carbohydrate degradation; pentose phosphate pathway; D-ribulose 5-phosphate from D-glucose 6-phosphate (oxidative stage): step 3/3. Catalyzes the oxidative decarboxylation of 6-phosphogluconate to ribulose 5-phosphate and CO(2), with concomitant reduction of NADP to NADPH. The polypeptide is 6-phosphogluconate dehydrogenase, decarboxylating (gnd) (Haemophilus influenzae (strain ATCC 51907 / DSM 11121 / KW20 / Rd)).